A 192-amino-acid polypeptide reads, in one-letter code: MNAIWIAVAAVSLLGLAFGAILGYASRRFAVEDDPVVEKIDEILPQSQCGQCGYPGCRPYAEAISCNGEKINRCAPGGEAVMLKIAELLNVEPQPLDGEAQEITPARMVAVIDENNCIGCTKCIQACPVDAIVGATRAMHTVMSDLCTGCNLCVDPCPTHCISLQPVAETPDSWKWDLNTIPVRIIPVEHHA.

The segment at 1 to 26 is hydrophobic; that stretch reads MNAIWIAVAAVSLLGLAFGAILGYAS. Residues 32–91 form the 4Fe-4S domain; that stretch reads EDDPVVEKIDEILPQSQCGQCGYPGCRPYAEAISCNGEKINRCAPGGEAVMLKIAELLNV. Positions 49, 52, 57, 74, 117, 120, 123, 127, 147, 150, 153, and 157 each coordinate [4Fe-4S] cluster. 2 consecutive 4Fe-4S ferredoxin-type domains span residues 108-137 and 138-167; these read MVAVIDENNCIGCTKCIQACPVDAIVGATR and AMHTVMSDLCTGCNLCVDPCPTHCISLQPV.

It belongs to the 4Fe4S bacterial-type ferredoxin family. RnfB subfamily. As to quaternary structure, the complex is composed of six subunits: RsxA, RsxB, RsxC, RsxD, RsxE and RsxG. Requires [4Fe-4S] cluster as cofactor.

It localises to the cell inner membrane. Its function is as follows. Part of a membrane-bound complex that couples electron transfer with translocation of ions across the membrane. Required to maintain the reduced state of SoxR. The chain is Ion-translocating oxidoreductase complex subunit B from Escherichia coli O8 (strain IAI1).